A 79-amino-acid chain; its full sequence is Dolichyl-diphosphooligosaccharide--protein glycosyltransferase subunit DAD1 (79 aa).

Topologically, residues 1–19 (AVATALIQVAYMGLVGSFP) are lumenal. A helical transmembrane segment spans residues 20 to 40 (FNSFLSGVLSCIGTAVLAVCL). Topologically, residues 41–58 (RIQVNKDNKEFKDLPPER) are cytoplasmic. A helical transmembrane segment spans residues 59–79 (AFADFVLCNLVLHLVIMNFLG).

Belongs to the DAD/OST2 family. In terms of assembly, component of the oligosaccharyltransferase (OST) complex.

It is found in the endoplasmic reticulum membrane. It functions in the pathway protein modification; protein glycosylation. Its function is as follows. Subunit of the oligosaccharyl transferase (OST) complex that catalyzes the initial transfer of a defined glycan (Glc(3)Man(9)GlcNAc(2) in eukaryotes) from the lipid carrier dolichol-pyrophosphate to an asparagine residue within an Asn-X-Ser/Thr consensus motif in nascent polypeptide chains, the first step in protein N-glycosylation. N-glycosylation occurs cotranslationally and the complex associates with the Sec61 complex at the channel-forming translocon complex that mediates protein translocation across the endoplasmic reticulum (ER). All subunits are required for a maximal enzyme activity. The polypeptide is Dolichyl-diphosphooligosaccharide--protein glycosyltransferase subunit DAD1 (DAD1) (Zea mays (Maize)).